A 334-amino-acid polypeptide reads, in one-letter code: TPR repeat-containing protein MJ0798 (334 aa).

7 TPR repeats span residues 102–135 (WKLW…NQNT), 137–168 (LLCK…DRNN), 169–202 (YKAL…NPND), 204–235 (EALE…KPDD), 236–269 (IDLI…NPNV), 273–306 (EQIY…NLYH), and 308–333 (EIYE…YKKL).

This is TPR repeat-containing protein MJ0798 from Methanocaldococcus jannaschii (strain ATCC 43067 / DSM 2661 / JAL-1 / JCM 10045 / NBRC 100440) (Methanococcus jannaschii).